Reading from the N-terminus, the 248-residue chain is Histone H1, gonadal (248 aa).

Disordered stretches follow at residues proline 1 to leucine 46 and alanine 115 to lysine 248. Over residues alanine 9–alanine 39 the composition is skewed to basic residues. The 75-residue stretch at threonine 41–alanine 115 folds into the H15 domain. The span at lysine 118 to lysine 248 shows a compositional bias: basic residues.

The protein belongs to the histone H1/H5 family. In terms of tissue distribution, sperm.

The protein localises to the nucleus. It localises to the chromosome. In terms of biological role, histones H1 are necessary for the condensation of nucleosome chains into higher-order structures. This Parechinus angulosus (Angulate sea urchin) protein is Histone H1, gonadal.